Reading from the N-terminus, the 170-residue chain is Translationally-controlled tumor protein homolog (170 aa).

The TCTP domain occupies 1 to 170 (MIIYKDLLSG…FKDGLEIEKC (170 aa)).

Belongs to the TCTP family.

It is found in the cytoplasm. Its function is as follows. Involved in calcium binding and microtubule stabilization. This chain is Translationally-controlled tumor protein homolog (tpt1), found in Scophthalmus maximus (Turbot).